Reading from the N-terminus, the 293-residue chain is Tyrosine recombinase XerD (293 aa).

The region spanning 1-83 (MHGLIADFIH…ALRKFYRFLL (83 aa)) is the Core-binding (CB) domain. The Tyr recombinase domain maps to 104–287 (HLPATLSGTE…SNQHLVAVYH (184 aa)). Active-site residues include Arg144, Lys168, His239, Arg242, and His265. Residue Tyr274 is the O-(3'-phospho-DNA)-tyrosine intermediate of the active site.

The protein belongs to the 'phage' integrase family. XerD subfamily. Forms a cyclic heterotetrameric complex composed of two molecules of XerC and two molecules of XerD.

Its subcellular location is the cytoplasm. In terms of biological role, site-specific tyrosine recombinase, which acts by catalyzing the cutting and rejoining of the recombining DNA molecules. The XerC-XerD complex is essential to convert dimers of the bacterial chromosome into monomers to permit their segregation at cell division. It also contributes to the segregational stability of plasmids. This chain is Tyrosine recombinase XerD, found in Lacticaseibacillus casei (Lactobacillus casei).